The primary structure comprises 247 residues: Ribosomal RNA small subunit methyltransferase G (247 aa).

3 residues coordinate S-adenosyl-L-methionine: G86, L91, and R154.

It belongs to the methyltransferase superfamily. RNA methyltransferase RsmG family.

It is found in the cytoplasm. In terms of biological role, specifically methylates the N7 position of a guanine in 16S rRNA. In Leptospira biflexa serovar Patoc (strain Patoc 1 / Ames), this protein is Ribosomal RNA small subunit methyltransferase G.